Reading from the N-terminus, the 352-residue chain is N-acetyl-gamma-glutamyl-phosphate reductase (352 aa).

Cys-155 is a catalytic residue.

The protein belongs to the NAGSA dehydrogenase family. Type 1 subfamily.

Its subcellular location is the cytoplasm. It carries out the reaction N-acetyl-L-glutamate 5-semialdehyde + phosphate + NADP(+) = N-acetyl-L-glutamyl 5-phosphate + NADPH + H(+). Its pathway is amino-acid biosynthesis; L-arginine biosynthesis; N(2)-acetyl-L-ornithine from L-glutamate: step 3/4. Functionally, catalyzes the NADPH-dependent reduction of N-acetyl-5-glutamyl phosphate to yield N-acetyl-L-glutamate 5-semialdehyde. The sequence is that of N-acetyl-gamma-glutamyl-phosphate reductase from Rippkaea orientalis (strain PCC 8801 / RF-1) (Cyanothece sp. (strain PCC 8801)).